A 637-amino-acid chain; its full sequence is Cell division cycle-related protein res1/sct1 (637 aa).

The 107-residue stretch at 6–112 (IHKITYSGVE…YSGSAFMPMS (107 aa)) folds into the HTH APSES-type domain. The segment at residues 37–58 (ATQILKIAELDKPRRTRILEKF) is a DNA-binding region (H-T-H motif). The interval 114-137 (FTPQSNRKPTEAYRRNSPVKKSFS) is disordered. 2 ANK repeats span residues 236–265 (DGHTALHWAAAMGNLEMMHALLQAGANVVA) and 357–386 (HGDTALLICARNGAKKCARLLLSFYASSSI).

DSC1 contains cdc10 and sct1/res1.

Its function is as follows. Acts as a positive regulator of the mitotic cell cycle and as a negative regulator of sexual differentiation. May be involved in the transcriptional regulation of the cdc22 and cdt1 genes. Is an integral component of the DSC1-like complex. The protein is Cell division cycle-related protein res1/sct1 (res1) of Schizosaccharomyces pombe (strain 972 / ATCC 24843) (Fission yeast).